A 243-amino-acid chain; its full sequence is Biosynthetic peptidoglycan transglycosylase (243 aa).

A helical transmembrane segment spans residues 21–43 (LLIVSLVSALMSVLQVIVFRFVD).

It belongs to the glycosyltransferase 51 family.

The protein localises to the cell inner membrane. The enzyme catalyses [GlcNAc-(1-&gt;4)-Mur2Ac(oyl-L-Ala-gamma-D-Glu-L-Lys-D-Ala-D-Ala)](n)-di-trans,octa-cis-undecaprenyl diphosphate + beta-D-GlcNAc-(1-&gt;4)-Mur2Ac(oyl-L-Ala-gamma-D-Glu-L-Lys-D-Ala-D-Ala)-di-trans,octa-cis-undecaprenyl diphosphate = [GlcNAc-(1-&gt;4)-Mur2Ac(oyl-L-Ala-gamma-D-Glu-L-Lys-D-Ala-D-Ala)](n+1)-di-trans,octa-cis-undecaprenyl diphosphate + di-trans,octa-cis-undecaprenyl diphosphate + H(+). Its pathway is cell wall biogenesis; peptidoglycan biosynthesis. Functionally, peptidoglycan polymerase that catalyzes glycan chain elongation from lipid-linked precursors. The chain is Biosynthetic peptidoglycan transglycosylase from Xylella fastidiosa (strain Temecula1 / ATCC 700964).